We begin with the raw amino-acid sequence, 144 residues long: uncharacterized protein (144 aa).

Belongs to the mimivirus L885/R898 family.

This is an uncharacterized protein from Acanthamoeba polyphaga (Amoeba).